The chain runs to 422 residues: Enolase (422 aa).

Gln162 is a binding site for (2R)-2-phosphoglycerate. Catalysis depends on Glu204, which acts as the Proton donor. Mg(2+) is bound by residues Asp241, Glu285, and Asp312. (2R)-2-phosphoglycerate is bound by residues Lys337, Arg366, Ser367, and Lys388. Lys337 (proton acceptor) is an active-site residue.

This sequence belongs to the enolase family. The cofactor is Mg(2+).

It is found in the cytoplasm. The protein localises to the secreted. The protein resides in the cell surface. The catalysed reaction is (2R)-2-phosphoglycerate = phosphoenolpyruvate + H2O. The protein operates within carbohydrate degradation; glycolysis; pyruvate from D-glyceraldehyde 3-phosphate: step 4/5. Functionally, catalyzes the reversible conversion of 2-phosphoglycerate (2-PG) into phosphoenolpyruvate (PEP). It is essential for the degradation of carbohydrates via glycolysis. This is Enolase from Streptococcus thermophilus.